The primary structure comprises 206 residues: HTH-type transcriptional regulator Hpr (206 aa).

The 145-residue stretch at alanine 13–glycine 157 folds into the HTH marR-type domain. A DNA-binding region (H-T-H motif) is located at residues isoleucine 63–glutamate 86. Residues serine 177 to asparagine 206 are disordered. Residues glutamate 178–asparagine 206 are compositionally biased toward basic and acidic residues.

As to quaternary structure, homodimer.

Functionally, negative regulator of protease production and sporulation. In Bacillus licheniformis (strain ATCC 14580 / DSM 13 / JCM 2505 / CCUG 7422 / NBRC 12200 / NCIMB 9375 / NCTC 10341 / NRRL NRS-1264 / Gibson 46), this protein is HTH-type transcriptional regulator Hpr.